Here is a 125-residue protein sequence, read N- to C-terminus: Large ribosomal subunit protein uL22 (125 aa).

Belongs to the universal ribosomal protein uL22 family. In terms of assembly, part of the 50S ribosomal subunit.

This protein binds specifically to 23S rRNA; its binding is stimulated by other ribosomal proteins, e.g. L4, L17, and L20. It is important during the early stages of 50S assembly. It makes multiple contacts with different domains of the 23S rRNA in the assembled 50S subunit and ribosome. Functionally, the globular domain of the protein is located near the polypeptide exit tunnel on the outside of the subunit, while an extended beta-hairpin is found that lines the wall of the exit tunnel in the center of the 70S ribosome. This Erythrobacter litoralis (strain HTCC2594) protein is Large ribosomal subunit protein uL22.